The primary structure comprises 143 residues: Large ribosomal subunit protein uL15 (143 aa).

The disordered stretch occupies residues 1 to 54 (MELNSIKPADGAKHAARRVGRGIGSGLGKTAGRGHKGQKSRSGGYHKVGFEGGQ). Residues 21 to 31 (RGIGSGLGKTA) show a composition bias toward gly residues.

It belongs to the universal ribosomal protein uL15 family. As to quaternary structure, part of the 50S ribosomal subunit.

Functionally, binds to the 23S rRNA. This is Large ribosomal subunit protein uL15 from Acidovorax ebreus (strain TPSY) (Diaphorobacter sp. (strain TPSY)).